Consider the following 716-residue polypeptide: Putative cuticle collagen 99 (716 aa).

2 disordered regions span residues 85–122 and 183–472; these read LPSS…PVGP and PPGP…SLVA. Triple-helical region stretches follow at residues 179–238, 265–298, and 302–330; these read GMPG…KGDR, LPGP…FDGE, and GPKG…EKGD. The segment covering 266–277 has biased composition (pro residues); the sequence is PGPPGPPGPPGP. Residues 280–290 are compositionally biased toward basic and acidic residues; that stretch reads RDGRHGLKGDR. Positions 349–358 are enriched in pro residues; it reads PGPPGPPGPP. 2 triple-helical region regions span residues 385 to 411 and 422 to 467; these read GPPG…AGAA and GPPG…GRHG. Residues 389–401 are compositionally biased toward basic and acidic residues; that stretch reads EKGERGERGEPGD. Residues 402–422 show a composition bias toward low complexity; the sequence is RGLPGAAGAANLLNGGKALVG. A compositionally biased stretch (basic and acidic residues) spans 429–444; sequence RDGRPGDKGEKGEQGL. Asn-474 carries N-linked (GlcNAc...) asparagine glycosylation. The segment at 503 to 716 is disordered; the sequence is KNVIPGPPGP…GAETRPPVTD (214 aa). Triple-helical region stretches follow at residues 507–557, 566–603, and 605–664; these read PGPP…QPGA, GPRG…PPGP, and GLRG…PGLD. The span at 568-577 shows a compositional bias: pro residues; it reads RGPPGLPGPP.

It belongs to the cuticular collagen family. In terms of assembly, collagen polypeptide chains are complexed within the cuticle by disulfide bonds and other types of covalent cross-links.

In terms of biological role, nematode cuticles are composed largely of collagen-like proteins. The cuticle functions both as an exoskeleton and as a barrier to protect the worm from its environment. In Caenorhabditis elegans, this protein is Putative cuticle collagen 99 (col-99).